A 357-amino-acid chain; its full sequence is Elongation factor Ts (357 aa).

The involved in Mg(2+) ion dislocation from EF-Tu stretch occupies residues Thr-82 to Val-85.

The protein belongs to the EF-Ts family.

It is found in the cytoplasm. Its function is as follows. Associates with the EF-Tu.GDP complex and induces the exchange of GDP to GTP. It remains bound to the aminoacyl-tRNA.EF-Tu.GTP complex up to the GTP hydrolysis stage on the ribosome. The protein is Elongation factor Ts of Campylobacter jejuni subsp. jejuni serotype O:23/36 (strain 81-176).